A 409-amino-acid polypeptide reads, in one-letter code: MHAWPASEVPVLPGKGRDLRIHDTATDGLITLDPGPVARIYVCGITPYDATHMGHAATYNAFDLVQRVWLDTKRQVHYVQNVTDVDDPLLERAARDDIDWVALAEKETALFREDMTALRMLPPRHYIGAVEAIPGIVPLVERLLASGAAYELEGDVYFSVEADPDFGKVSRLDAATMRLLSAERGGDPDRAGKKNPLDPMLWMAAREGEPSWDGGSLGRGRPGWHIECVAIALDHLGMGFDVQGGGSDLAFPHHEMGASHAQALTGEFPMAKAYVHAGMVALHGEKMSKSKGNLVFVSALRRDGVDPAAIRLALLAHHYRADWEWTDQVLQDAVDRLGRWRAAVSRPDGPPAEALVEEIREALAHDLDAPAALAAVDRWAALQEERGGTDEGAPGVVSRAVDALLGVAL.

Cysteine 43 lines the Zn(2+) pocket. L-cysteinyl-5'-AMP contacts are provided by residues 43–46 (CGIT), threonine 58, and 81–83 (NVT). A 'HIGH' region motif is present at residues 45 to 55 (ITPYDATHMGH). A 'ERGGDP' region motif is present at residues 183 to 188 (ERGGDP). Residue tryptophan 224 coordinates L-cysteinyl-5'-AMP. Position 228 (cysteine 228) interacts with Zn(2+). Residue 246 to 248 (GSD) participates in L-cysteinyl-5'-AMP binding. Histidine 253 is a Zn(2+) binding site. Valine 280 serves as a coordination point for L-cysteinyl-5'-AMP. Positions 286-290 (KMSKS) match the 'KMSKS' region motif.

The protein belongs to the class-I aminoacyl-tRNA synthetase family. MshC subfamily. As to quaternary structure, monomer. Zn(2+) is required as a cofactor.

It carries out the reaction 1D-myo-inositol 2-amino-2-deoxy-alpha-D-glucopyranoside + L-cysteine + ATP = 1D-myo-inositol 2-(L-cysteinylamino)-2-deoxy-alpha-D-glucopyranoside + AMP + diphosphate + H(+). Catalyzes the ATP-dependent condensation of GlcN-Ins and L-cysteine to form L-Cys-GlcN-Ins. In Streptomyces scabiei (strain 87.22), this protein is L-cysteine:1D-myo-inositol 2-amino-2-deoxy-alpha-D-glucopyranoside ligase.